Reading from the N-terminus, the 362-residue chain is MSNIAILAGDGIGPEVMVEAKKVLNTVASKFDFEITTQDYDIGGAAIDNHGNALPDSTMAGCIESDAILFGSVGGPKWANLPPTEQPERCALLGLRSHFDLFCNMRPATLQPALSSLSTLRSDISEQGFDVLVIRELTGDIYFGEPKGRRGEGEEETGFDSMFYSRREVKRISHLAFQAAQKRNNKVTSVDKANVLATSQLWRQVVEEVAVEYPDVELEHLYVDNAAMQLVRDPNQFDVMLCPNLFGDILSDICAMITGSMGLLPSASLNSDGFGMYEPAGGSAPDIAGLGVANPIAQILSAALMLRYSLNQGAAAKAIEDAVSNALDNGVLTADLLPANERKNAKSTSEVGDYICKQIESA.

75–88 is an NAD(+) binding site; it reads GPKWANLPPTEQPE. Residues Arg-96, Arg-106, Arg-135, and Asp-224 each contribute to the substrate site. Residues Asp-224, Asp-248, and Asp-252 each coordinate Mg(2+). 282–294 contributes to the NAD(+) binding site; sequence GSAPDIAGLGVAN.

This sequence belongs to the isocitrate and isopropylmalate dehydrogenases family. LeuB type 1 subfamily. In terms of assembly, homodimer. Requires Mg(2+) as cofactor. Mn(2+) serves as cofactor.

The protein localises to the cytoplasm. The enzyme catalyses (2R,3S)-3-isopropylmalate + NAD(+) = 4-methyl-2-oxopentanoate + CO2 + NADH. The protein operates within amino-acid biosynthesis; L-leucine biosynthesis; L-leucine from 3-methyl-2-oxobutanoate: step 3/4. In terms of biological role, catalyzes the oxidation of 3-carboxy-2-hydroxy-4-methylpentanoate (3-isopropylmalate) to 3-carboxy-4-methyl-2-oxopentanoate. The product decarboxylates to 4-methyl-2 oxopentanoate. This Colwellia psychrerythraea (strain 34H / ATCC BAA-681) (Vibrio psychroerythus) protein is 3-isopropylmalate dehydrogenase.